The following is a 283-amino-acid chain: 4-diphosphocytidyl-2-C-methyl-D-erythritol kinase (283 aa).

Residue Lys8 is part of the active site. 90-100 (PIGSGLAGGSS) lines the ATP pocket. Asp132 is an active-site residue.

Belongs to the GHMP kinase family. IspE subfamily.

It carries out the reaction 4-CDP-2-C-methyl-D-erythritol + ATP = 4-CDP-2-C-methyl-D-erythritol 2-phosphate + ADP + H(+). The protein operates within isoprenoid biosynthesis; isopentenyl diphosphate biosynthesis via DXP pathway; isopentenyl diphosphate from 1-deoxy-D-xylulose 5-phosphate: step 3/6. Catalyzes the phosphorylation of the position 2 hydroxy group of 4-diphosphocytidyl-2C-methyl-D-erythritol. This is 4-diphosphocytidyl-2-C-methyl-D-erythritol kinase from Chlamydia muridarum (strain MoPn / Nigg).